Reading from the N-terminus, the 540-residue chain is FAD-binding monooxygenase lolF1 (540 aa).

Residues 43–46 (VWRE) and 55–58 (DSLF) each bind FAD. Residues 53–55 (AVD), 182–188 (TGPSGVQ), and 205–206 (QS) each bind NADP(+).

Belongs to the FAD-binding monooxygenase family. FAD is required as a cofactor.

It participates in alkaloid biosynthesis. Its function is as follows. FAD-binding monooxygenase; part of the gene cluster that mediates the biosynthesis of loline alkaloids, potent insecticidal agents composed of a pyrrolizidine ring system and an uncommon ether bridge linking carbons 2 and 7. Lolines are structurally differentiated by the various modifications of the L-amino group and include norloline, loline, N-methylloline, N-acetylloline, N-acetylnorloline, and N-formylloline. The first committed step is the condensation of O-acetyl-L-homoserine (derived from L-aspartic acid) and L-proline, probably catalyzed by the gamma-type pyridoxal 5'-phosphate(PLP)-dependent enzyme lolC, to give the diamino diacid, NACPP. Ensuing cyclization, decarboxylation, and acetylation steps yield 1-exo-acetamidopyrrolizidine (AcAP). LolO is required for installation of the ether bridge upon the pathway intermediate, 1-exo-acetamidopyrrolizidine (AcAP). In sequential 2-oxoglutarate- and O(2)-consuming steps, lolO removes hydrogens from C2 and C7 of AcAP to form both carbon-oxygen bonds in N-acetylnorloline (NANL), the precursor to all other lolines. The enzymes lolD, lolE, lolF and lolT have also been proposed to be involved in the ether-bridge installation. Further processing of the exocyclic moiety of NANL by fungal N-acetamidase (LolN), methyltransferase (LolM), and cytochrome P450 (LolP) enzymes, with occasional involvement of a plant acetyltransferase, generates the other known lolines. LolN transforms NANL to norlonine which is monomethylated and dimethylated to respectively lonine and N-methyllonine (NML) by lolM. LolP catalyzes hydroxylation of the methyl group in N-methylloline (NML) and further oxygenation to N-formylloline (NFL). A plant acetyltransferase is responsible for the acetylation of loline to form N-acetylloline (NAL). LolA might interact with aspartate kinase to prevent feedback inhibition of its activity by these end products and thereby promote production of L-homoserine from L-aspartate. This Epichloe uncinata (Endophyte fungus) protein is FAD-binding monooxygenase lolF1.